The primary structure comprises 237 residues: KH homology domain-containing protein 1 (237 aa).

Transmembrane regions (helical) follow at residues 7-29 (RLFRVLFVIETVSEYGVLIFIYG) and 33-50 (LQTLAMLLIGTVSFHLWI). Positions 96 to 155 (PMVFHMEEDQEELIFGHGDTYLRCIEVHSHTLIQLESWFTATGQTRVTVVGPHRARQWLL) constitute a KH; atypical domain.

It belongs to the KHDC1 family.

It is found in the membrane. The polypeptide is KH homology domain-containing protein 1 (Homo sapiens (Human)).